Reading from the N-terminus, the 181-residue chain is uncharacterized protein (181 aa).

This is an uncharacterized protein from Ictalurid herpesvirus 1 (strain Auburn) (IcHV-1).